A 455-amino-acid polypeptide reads, in one-letter code: MYKHPWLPNLDLIDEMLKEIGVNSLDELFNDIPAEIKINRLLNVAKGKPLSEYEIEKEINEKVKKNVELQAPPFIGAGICPHYIPNVVKFIIGRSEFYTSYTPYQPEISQGLLQALFEYQSLMAELLDMDVVNASMYDWGSALAEAVLMANRINGKKTVLVPENANPFHKEVVRTWIGGKGIKIEEVKYDKNSGELDLEDLEKKSNIDDISAIYIQQPNFFGIFESNIEHVIDVAKHKRALSIVGVNPLSLGLIKPPGSYEADIVVGDGQELGLPLNFGGPLMGVFAVRWDMSLVRQMPGRIVGITKDTNGKMGFTLILQTREQFIKREKATSNITTNEALLAIANAVYLSLLGKEGMRELAEEIYFRSHYAAKKLTEIDNVSMPFRSDFFEEFAIRFPIEYDKISNKLKERKLQGGLKLSDYTSLFCVTEVHDKKSIDLLVSTIQEMINGVETS.

Belongs to the GcvP family. N-terminal subunit subfamily. In terms of assembly, the glycine cleavage system is composed of four proteins: P, T, L and H. In this organism, the P 'protein' is a heterodimer of two subunits.

It catalyses the reaction N(6)-[(R)-lipoyl]-L-lysyl-[glycine-cleavage complex H protein] + glycine + H(+) = N(6)-[(R)-S(8)-aminomethyldihydrolipoyl]-L-lysyl-[glycine-cleavage complex H protein] + CO2. Its function is as follows. The glycine cleavage system catalyzes the degradation of glycine. The P protein binds the alpha-amino group of glycine through its pyridoxal phosphate cofactor; CO(2) is released and the remaining methylamine moiety is then transferred to the lipoamide cofactor of the H protein. The polypeptide is Probable glycine dehydrogenase (decarboxylating) subunit 1 (Saccharolobus islandicus (strain Y.N.15.51 / Yellowstone #2) (Sulfolobus islandicus)).